A 608-amino-acid polypeptide reads, in one-letter code: Glutamyl-tRNA(Gln) amidotransferase subunit E (608 aa).

The interval 402-422 (EETRGANPDGTTRFLRPRPGA) is disordered.

The protein belongs to the GatB/GatE family. GatE subfamily. As to quaternary structure, heterodimer of GatD and GatE.

The catalysed reaction is L-glutamyl-tRNA(Gln) + L-glutamine + ATP + H2O = L-glutaminyl-tRNA(Gln) + L-glutamate + ADP + phosphate + H(+). In terms of biological role, allows the formation of correctly charged Gln-tRNA(Gln) through the transamidation of misacylated Glu-tRNA(Gln) in organisms which lack glutaminyl-tRNA synthetase. The reaction takes place in the presence of glutamine and ATP through an activated gamma-phospho-Glu-tRNA(Gln). The GatDE system is specific for glutamate and does not act on aspartate. This Pyrobaculum calidifontis (strain DSM 21063 / JCM 11548 / VA1) protein is Glutamyl-tRNA(Gln) amidotransferase subunit E.